The following is a 149-amino-acid chain: 3-dehydroquinate dehydratase (149 aa).

The active-site Proton acceptor is Tyr26. Positions 77, 83, and 90 each coordinate substrate. His103 serves as the catalytic Proton donor. Substrate-binding positions include 104-105 (LS) and Arg114.

This sequence belongs to the type-II 3-dehydroquinase family. As to quaternary structure, homododecamer.

It catalyses the reaction 3-dehydroquinate = 3-dehydroshikimate + H2O. It participates in metabolic intermediate biosynthesis; chorismate biosynthesis; chorismate from D-erythrose 4-phosphate and phosphoenolpyruvate: step 3/7. Functionally, catalyzes a trans-dehydration via an enolate intermediate. The sequence is that of 3-dehydroquinate dehydratase from Vibrio parahaemolyticus serotype O3:K6 (strain RIMD 2210633).